The primary structure comprises 296 residues: 4-hydroxy-tetrahydrodipicolinate synthase (296 aa).

Thr-49 is a pyruvate binding site. The active-site Proton donor/acceptor is Tyr-137. Lys-166 functions as the Schiff-base intermediate with substrate in the catalytic mechanism. Residue Ile-208 participates in pyruvate binding.

Belongs to the DapA family. As to quaternary structure, homotetramer; dimer of dimers.

The protein localises to the cytoplasm. The catalysed reaction is L-aspartate 4-semialdehyde + pyruvate = (2S,4S)-4-hydroxy-2,3,4,5-tetrahydrodipicolinate + H2O + H(+). Its pathway is amino-acid biosynthesis; L-lysine biosynthesis via DAP pathway; (S)-tetrahydrodipicolinate from L-aspartate: step 3/4. In terms of biological role, catalyzes the condensation of (S)-aspartate-beta-semialdehyde [(S)-ASA] and pyruvate to 4-hydroxy-tetrahydrodipicolinate (HTPA). The polypeptide is 4-hydroxy-tetrahydrodipicolinate synthase (Chlorobium phaeobacteroides (strain DSM 266 / SMG 266 / 2430)).